A 108-amino-acid polypeptide reads, in one-letter code: UPF0060 membrane protein CC_1976 (108 aa).

Helical transmembrane passes span 4–24, 27–47, 59–79, and 85–105; these read FAIYVLAALAEIAGCFGFWAW, LGKSPAWAVLGVLSLVIFALL, AFAAYGGVYIIASLAWMQVVE, and RWDLIGGVICLAGAALILFGP.

Belongs to the UPF0060 family.

It is found in the cell inner membrane. The polypeptide is UPF0060 membrane protein CC_1976 (Caulobacter vibrioides (strain ATCC 19089 / CIP 103742 / CB 15) (Caulobacter crescentus)).